The chain runs to 183 residues: Hypoxanthine/guanine phosphoribosyltransferase (183 aa).

The protein belongs to the purine/pyrimidine phosphoribosyltransferase family. Archaeal HPRT subfamily. As to quaternary structure, homodimer.

The protein localises to the cytoplasm. The catalysed reaction is IMP + diphosphate = hypoxanthine + 5-phospho-alpha-D-ribose 1-diphosphate. The enzyme catalyses GMP + diphosphate = guanine + 5-phospho-alpha-D-ribose 1-diphosphate. Its pathway is purine metabolism; IMP biosynthesis via salvage pathway; IMP from hypoxanthine: step 1/1. Its function is as follows. Catalyzes a salvage reaction resulting in the formation of IMP that is energically less costly than de novo synthesis. The sequence is that of Hypoxanthine/guanine phosphoribosyltransferase from Methanocaldococcus infernus (strain DSM 11812 / JCM 15783 / ME).